Reading from the N-terminus, the 539-residue chain is Diacylglycerol O-acyltransferase 1 (539 aa).

A disordered region spans residues 1-104; the sequence is MAISDMPEST…NDGGEKIANG (104 aa). A compositionally biased stretch (polar residues) spans 33–52; the sequence is TETTEVSDSNSKTTDPDSGN. Residues 56–80 show a composition bias toward basic and acidic residues; the sequence is ESVRVRDSSTDESLARKSCEDDGSR. The next 7 membrane-spanning stretches (helical) occupy residues 143-163, 187-207, 219-239, 244-264, 294-314, 334-354, and 383-403; these read HAGL…RLII, WPLL…FVVE, VVLL…VFVI, SVVL…LKLV, YPYS…TLCY, VKLI…INPI, and VWLC…AELL. The FYXDWWN motif motif lies at 410–416; sequence FYKDWWN. The next 3 membrane-spanning stretches (helical) occupy residues 451-471, 473-493, and 506-526; these read GVAI…CIAV, CHIF…LVLI, and VGNM…CVLL. Histidine 465 is a catalytic residue.

The protein belongs to the membrane-bound acyltransferase family. Sterol o-acyltransferase subfamily.

Its subcellular location is the endoplasmic reticulum membrane. It catalyses the reaction an acyl-CoA + a 1,2-diacyl-sn-glycerol = a triacyl-sn-glycerol + CoA. It functions in the pathway glycerolipid metabolism; triacylglycerol biosynthesis. Functionally, major contributor to triacylglycerol (TAG) synthesis and oil accumulation in developing seeds. Catalyzes the acylation of the sn-3 hydroxy group of sn-1,2-diacylglycerol using acyl-CoA. Has a marked preference for oleoyl-CoA as substrate. The chain is Diacylglycerol O-acyltransferase 1 from Corylus americana (American hazelnut).